A 1268-amino-acid polypeptide reads, in one-letter code: MGAGSVWASGLLLLWLLLLVAGDQDTQDTTATEKGLRMLKSGSGPVRAALAELVALPCFFTLQPRLSSLRDIPRIKWTKVQTASGQRQDLPILVAKDNVVRVAKGWQGRVSLPAYPRHRANATLLLGPLRASDSGLYRCQVVKGIEDEQDLVTLEVTGVVFHYRAARDRYALTFAEAQEACRLSSATIAAPRHLQAAFEDGFDNCDAGWLSDRTVRYPITQSRPGCYGDRSSLPGVRSYGRRDPQELYDVYCFARELGGEVFYVGPARRLTLAGARAQCQRQGAALASVGQLHLAWHEGLDQCDPGWLADGSVRYPIQTPRRRCGGPAPGVRTVYRFANRTGFPAPGARFDAYCFRAHHHTAQHGDSEIPSSGDEGEIVSAEGPPGRELKPSLGEQEVIAPDFQEPLMSSGEGEPPDLTWTQAPEETLGSTPGGPTLASWPSSEKWLFTGAPSSMGVSSPSDMGVDMEATTPLGTQVAPTPTMRRGRFKGLNGRHFQQQGPEDQLPEVAEPSAQPPTLGATANHMRPSAATEASESDQSHSPWAILTNEVDEPGAGSLGSRSLPESLMWSPSLISPSVPSTESTPSPKPGAAEAPSVKSAIPHLPRLPSEPPAPSPGPSEALSAVSLQASSADGSPDFPIVAMLRAPKLWLLPRSTLVPNMTPVPLSPASPLPSWVPEEQAVRPVSLGAEDLETPFQTTIAAPVEASHRSPDADSIEIEGTSSMRATKHPISGPWASLDSSNVTMNPVPSDAGILGTESGVLDLPGSPTSGGQATVEKVLATWLPLPGQGLDPGSQSTPMEAHGVAVSMEPTVALEGGATEGPMEATREVVPSTADATWESESRSAISSTHIAVTMARAQGMPTLTSTSSEGHPEPKGQMVAQESLEPLNTLPSHPWSSLVVPMDEVASVSSGEPTGLWDIPSTLIPVSLGLDESVLNVVAESPSVEGFWEEVASGQEDPTDPCENNPCLHGGTCHTNGTVYGCSCDQGYAGENCEIDIDDCLCSPCENGGTCIDEVNGFICLCLPSYGGSLCEKDTEGCDRGWHKFQGHCYRYFAHRRAWEDAERDCRRRAGHLTSVHSPEEHKFINSFGHENSWIGLNDRTVERDFQWTDNTGLQYENWREKQPDNFFAGGEDCVVMVAHESGRWNDVPCNYNLPYVCKKGTVLCGPPPAVENASLVGVRKIKYNVHATVRYQCDEGFSQHRVATIRCRNNGKWDRPQIMCIKPRRSHRMRRHHHHPHRHHKPRKEHRKHKRHPAEDWEKDEGDFC.

The N-terminal stretch at 1 to 22 (MGAGSVWASGLLLLWLLLLVAG) is a signal peptide. The region spanning 37 to 157 (RMLKSGSGPV…EQDLVTLEVT (121 aa)) is the Ig-like V-type domain. Intrachain disulfides connect Cys-58–Cys-139, Cys-181–Cys-252, Cys-205–Cys-226, Cys-279–Cys-354, and Cys-303–Cys-324. The N-linked (GlcNAc...) asparagine glycan is linked to Asn-121. 2 Link domains span residues 159 to 254 (VVFH…YCFA) and 258 to 356 (GGEV…YCFR). N-linked (GlcNAc...) asparagine glycosylation is present at Asn-339. 4 disordered regions span residues 363–391 (QHGDSEIPSSGDEGEIVSAEGPPGRELKP), 406–442 (PLMSSGEGEPPDLTWTQAPEETLGSTPGGPTLASWPS), 472–540 (PLGT…DQSH), and 574–630 (ISPS…LQAS). Residues Ser-380 and Ser-410 are each glycosylated (O-linked (Xyl...) (chondroitin sulfate) serine). Polar residues predominate over residues 419–430 (TWTQAPEETLGS). Over residues 575 to 585 (SPSVPSTESTP) the composition is skewed to low complexity. The span at 608 to 617 (PSEPPAPSPG) shows a compositional bias: pro residues. Positions 618–630 (PSEALSAVSLQAS) are enriched in low complexity. Asn-742 carries an N-linked (GlcNAc...) asparagine glycan. Positions 960–996 (PTDPCENNPCLHGGTCHTNGTVYGCSCDQGYAGENCE) constitute an EGF-like 1 domain. Intrachain disulfides connect Cys-964/Cys-975, Cys-969/Cys-984, Cys-986/Cys-995, Cys-1002/Cys-1013, Cys-1007/Cys-1022, Cys-1024/Cys-1033, Cys-1040/Cys-1051, Cys-1068/Cys-1160, Cys-1136/Cys-1152, Cys-1167/Cys-1210, and Cys-1196/Cys-1223. N-linked (GlcNAc...) asparagine glycosylation is present at Asn-978. Residues 998–1034 (DIDDCLCSPCENGGTCIDEVNGFICLCLPSYGGSLCE) enclose the EGF-like 2; calcium-binding domain. Residues 1036–1165 (DTEGCDRGWH…LPYVCKKGTV (130 aa)) enclose the C-type lectin domain. The Sushi domain maps to 1165 to 1225 (VLCGPPPAVE…WDRPQIMCIK (61 aa)). Asn-1175 is a glycosylation site (N-linked (GlcNAc...) asparagine). Residues 1228-1255 (RSHRMRRHHHHPHRHHKPRKEHRKHKRH) show a composition bias toward basic residues. The tract at residues 1228–1268 (RSHRMRRHHHHPHRHHKPRKEHRKHKRHPAEDWEKDEGDFC) is disordered.

This sequence belongs to the aggrecan/versican proteoglycan family. Post-translationally, O-glycosylated; contains chondroitin sulfate. In terms of tissue distribution, brain.

It localises to the secreted. Its function is as follows. May modulate neuronal adhesion and neurite growth during development by binding to neural cell adhesion molecules (NG-CAM and N-CAM). Chondroitin sulfate proteoglycan; binds to hyaluronic acid. This Mus musculus (Mouse) protein is Neurocan core protein (Ncan).